The chain runs to 255 residues: DNA repair protein RecO (255 aa).

Belongs to the RecO family.

Functionally, involved in DNA repair and RecF pathway recombination. The chain is DNA repair protein RecO from Bacillus velezensis (strain DSM 23117 / BGSC 10A6 / LMG 26770 / FZB42) (Bacillus amyloliquefaciens subsp. plantarum).